Here is a 386-residue protein sequence, read N- to C-terminus: MKIHEYQAKEVLRKYGVVTPRGIPCFSVDEAVKAAEELGGKIWVVKAQIHAGGRGKGGGVKLGKSLDEVRTLAGQILGMQLVTHQTGPEGQKVRRLLIEEGADIKKEYYVAALTDRATQKVAMMASSEGGMDIEEVAHNTPEKIIKVFVDPLAGLTDAQAIELAKGIGVPEASIPQAVDTFKKLYTCYMETDASLAEINPLILEGNGNIKALDAKFNFDSNALFRHPEIVAYRDLDEEDADEIEASKFDLAYISLDGNIGCLVNGAGLAMATMDTIKLFGAEPANFLDVGGGATTEKVTEAFKIMLKNPKVKGILVNIFGGIMKCDTIATGVVAAAKEVNLSVPLVVRMKGTNEDLGKKILAESGLPIISADTMAEAATKIVAEVK.

The 236-residue stretch at 9-244 (KEVLRKYGVV…LDEEDADEIE (236 aa)) folds into the ATP-grasp domain. Residues Lys-46, 53–55 (GRG), Glu-99, Ala-102, and Glu-107 contribute to the ATP site. Asn-199 and Asp-213 together coordinate Mg(2+). Substrate contacts are provided by residues Asn-264 and 321-323 (GIM).

The protein belongs to the succinate/malate CoA ligase beta subunit family. Heterotetramer of two alpha and two beta subunits. Requires Mg(2+) as cofactor.

It catalyses the reaction succinate + ATP + CoA = succinyl-CoA + ADP + phosphate. The catalysed reaction is GTP + succinate + CoA = succinyl-CoA + GDP + phosphate. It participates in carbohydrate metabolism; tricarboxylic acid cycle; succinate from succinyl-CoA (ligase route): step 1/1. Functionally, succinyl-CoA synthetase functions in the citric acid cycle (TCA), coupling the hydrolysis of succinyl-CoA to the synthesis of either ATP or GTP and thus represents the only step of substrate-level phosphorylation in the TCA. The beta subunit provides nucleotide specificity of the enzyme and binds the substrate succinate, while the binding sites for coenzyme A and phosphate are found in the alpha subunit. This Azoarcus sp. (strain BH72) protein is Succinate--CoA ligase [ADP-forming] subunit beta.